The primary structure comprises 276 residues: Rhomboid protease GlpG (276 aa).

Helical transmembrane passes span 94–114, 142–162, 169–189, 192–212, 229–249, and 250–270; these read GPVT…MQIL, ALMH…WYLG, LGSG…GYVQ, FSGP…GYVW, LIIF…GMSM, and ANGA…VDSL. Serine 201 functions as the Nucleophile in the catalytic mechanism. Histidine 254 is a catalytic residue.

This sequence belongs to the peptidase S54 family.

It localises to the cell inner membrane. The enzyme catalyses Cleaves type-1 transmembrane domains using a catalytic dyad composed of serine and histidine that are contributed by different transmembrane domains.. Rhomboid-type serine protease that catalyzes intramembrane proteolysis. This Escherichia coli O81 (strain ED1a) protein is Rhomboid protease GlpG.